An 860-amino-acid polypeptide reads, in one-letter code: Putative mixed-linked glucan synthase 1 (860 aa).

2 helical membrane passes run 63–83 and 93–113; these read ILHP…AFFA and GAWL…SWVL. Residue Asp183 is part of the active site. Positions 235–263 form a coiled coil; it reads ELMSDHRRVRREYEEFKVRIDSLSSTIRQ. Substrate-binding residues include Asp381 and Asp383. The active site involves Asp549. A run of 6 helical transmembrane segments spans residues 625-645, 655-675, 693-713, 747-767, 781-801, and 812-832; these read TYPI…MWLI, FGEY…IGMF, FYMI…ALKL, LLIP…VAVG, LAVL…PFAL, and AVLF…YVAF.

Belongs to the glycosyltransferase 2 family. Plant cellulose synthase-like F subfamily.

The protein resides in the golgi apparatus membrane. Functionally, may catalyze both beta-1,3 and beta-1,4 glycosidic linkage on beta-D-glucan. Essential for (1,3;1,4)-beta-D-glucans synthesis in grasses and cereals (Poaceae). The mixed-linked glucans (which are not present in walls of dicotyledons or most other monocotyledonous plants) are particularly important constituents of the walls of the starchy endosperm and aleurone cells of cereal grains such as oats, wheat, rice and barley. They can account for up to 70% by weight of the wall. This Oryza sativa subsp. japonica (Rice) protein is Putative mixed-linked glucan synthase 1 (CSFL1).